Here is a 93-residue protein sequence, read N- to C-terminus: MFLQTLRLTMPRMFLHMKPSPITITRACTVPSLLSVAAPQPALVAANRPLVFNRGFKVRTSVKKFCSDCYLVRRKGRVYIYCKSNKKHKQRQG.

The N-terminal 35 residues, 1 to 35 (MFLQTLRLTMPRMFLHMKPSPITITRACTVPSLLS), are a transit peptide targeting the mitochondrion.

The protein belongs to the bacterial ribosomal protein bL36 family. Component of the mitochondrial large ribosomal subunit (mt-LSU). Mature yeast 74S mitochondrial ribosomes consist of a small (37S) and a large (54S) subunit. The 37S small subunit contains a 15S ribosomal RNA (15S mt-rRNA) and 34 different proteins. The 54S large subunit contains a 21S rRNA (21S mt-rRNA) and 46 different proteins. bL36m has a zinc binding site.

It is found in the mitochondrion. Functionally, component of the mitochondrial ribosome (mitoribosome), a dedicated translation machinery responsible for the synthesis of mitochondrial genome-encoded proteins, including at least some of the essential transmembrane subunits of the mitochondrial respiratory chain. The mitoribosomes are attached to the mitochondrial inner membrane and translation products are cotranslationally integrated into the membrane. bL36m may be involved in a process influencing telomere capping. The chain is Large ribosomal subunit protein bL36m (RTC6) from Saccharomyces cerevisiae (strain ATCC 204508 / S288c) (Baker's yeast).